An 816-amino-acid chain; its full sequence is Phosphatidylinositol 4-kinase beta (816 aa).

Disordered regions lie at residues 1-30, 101-120, and 248-318; these read MGDTIVEPAPLKPTSEPAPGPPGNNGGSLL, EDEMGATVASGTAKGARRRR, and AHRK…SFSS. G2 bears the N-acetylglycine mark. The interaction with ACBD3 stretch occupies residues 2–68; the sequence is GDTIVEPAPL…VKLLHGGVAI (67 aa). One can recognise a PIK helical domain in the interval 29–242; it reads LLSVITEGVG…GTKLRKLILS (214 aa). At S258 the chain carries Phosphoserine. T263 carries the post-translational modification Phosphothreonine. A phosphoserine mark is found at S266, S275, S277, S284, and S294. Polar residues-rich tracts occupy residues 278–297 and 306–318; these read DATASISLSSNLKRTASNPK and SSSTESIDNSFSS. S428 carries the phosphoserine modification. Residue T438 is modified to Phosphothreonine. S511 is subject to Phosphoserine. Phosphothreonine is present on residues T517 and T519. In terms of domain architecture, PI3K/PI4K catalytic spans 535 to 801; sequence EPWQEKVRRI…MVDGSMRSIT (267 aa). The segment at 541-547 is G-loop; that stretch reads VRRIREG. Residues 668–676 form a catalytic loop region; that stretch reads QVKDRHNGN. Positions 687 to 711 are activation loop; the sequence is HIDFGFILSSSPRNLGFETSAFKLT.

This sequence belongs to the PI3/PI4-kinase family. Type III PI4K subfamily. In terms of assembly, interacts with ARF1 and ARF3 in the Golgi complex, but not with ARF4, ARF5 or ARF6. Interacts with NCS1/FREQ in a calcium-independent manner. Interacts with CALN1/CABP8 and CALN2/CABP7; in a calcium-dependent manner; this interaction competes with NCS1/FREQ binding. Interacts with ACBD3. Interacts with ARMH3, YWHAB, YWHAE, YWHAG, YWHAH, YWHAQ, YWHAZ and SFN. Interacts with GGA2 (via VHS domain); the interaction is important for PI4KB location at the Golgi apparatus membrane. Interacts with ATG9A. Mg(2+) is required as a cofactor. Mn(2+) serves as cofactor.

It is found in the endomembrane system. It localises to the mitochondrion outer membrane. The protein localises to the rough endoplasmic reticulum membrane. The protein resides in the golgi apparatus. Its subcellular location is the golgi apparatus membrane. It catalyses the reaction a 1,2-diacyl-sn-glycero-3-phospho-(1D-myo-inositol) + ATP = a 1,2-diacyl-sn-glycero-3-phospho-(1D-myo-inositol 4-phosphate) + ADP + H(+). Its activity is regulated as follows. Inhibited by wortmannin. Increased kinase activity upon interaction with NCS1/FREQ. Phosphorylates phosphatidylinositol (PI) in the first committed step in the production of the second messenger inositol-1,4,5,-trisphosphate (PIP). May regulate Golgi disintegration/reorganization during mitosis, possibly via its phosphorylation. Involved in Golgi-to-plasma membrane trafficking. This chain is Phosphatidylinositol 4-kinase beta (PI4KB), found in Bos taurus (Bovine).